The primary structure comprises 144 residues: Large ribosomal subunit protein uL13 (144 aa).

The protein belongs to the universal ribosomal protein uL13 family. In terms of assembly, part of the 50S ribosomal subunit.

This protein is one of the early assembly proteins of the 50S ribosomal subunit, although it is not seen to bind rRNA by itself. It is important during the early stages of 50S assembly. This Lawsonia intracellularis (strain PHE/MN1-00) protein is Large ribosomal subunit protein uL13.